A 139-amino-acid polypeptide reads, in one-letter code: ATP synthase epsilon chain (139 aa).

Belongs to the ATPase epsilon chain family. F-type ATPases have 2 components, CF(1) - the catalytic core - and CF(0) - the membrane proton channel. CF(1) has five subunits: alpha(3), beta(3), gamma(1), delta(1), epsilon(1). CF(0) has three main subunits: a, b and c.

It is found in the cell inner membrane. Produces ATP from ADP in the presence of a proton gradient across the membrane. The sequence is that of ATP synthase epsilon chain from Pseudomonas entomophila (strain L48).